Reading from the N-terminus, the 567-residue chain is Thiol:disulfide interchange protein DsbD (567 aa).

An N-terminal signal peptide occupies residues 1 to 19; that stretch reads MAQRIFTLILLLCSTSAFA. 2 cysteine pairs are disulfide-bonded: Cys122–Cys128 and Cys185–Cys307. The next 8 helical transmembrane spans lie at 166 to 186, 210 to 230, 246 to 266, 299 to 319, 326 to 346, 360 to 380, 387 to 407, and 418 to 438; these read LPFS…TPCV, LLLA…LGLV, YVLI…FGLF, IAGL…LLYI, WLGG…LMLV, WMAH…VFLL, AWGL…AFIT, and IVQI…QDWA. The Thioredoxin domain occupies 435-567; it reads QDWAFGSPSA…FSAHLHDRQP (133 aa). The cysteines at positions 482 and 485 are disulfide-linked.

The protein belongs to the thioredoxin family. DsbD subfamily.

The protein localises to the cell inner membrane. The enzyme catalyses [protein]-dithiol + NAD(+) = [protein]-disulfide + NADH + H(+). The catalysed reaction is [protein]-dithiol + NADP(+) = [protein]-disulfide + NADPH + H(+). Its function is as follows. Required to facilitate the formation of correct disulfide bonds in some periplasmic proteins and for the assembly of the periplasmic c-type cytochromes. Acts by transferring electrons from cytoplasmic thioredoxin to the periplasm. This transfer involves a cascade of disulfide bond formation and reduction steps. The chain is Thiol:disulfide interchange protein DsbD from Salmonella choleraesuis (strain SC-B67).